The primary structure comprises 311 residues: Aspartate carbamoyltransferase catalytic subunit (311 aa).

Carbamoyl phosphate-binding residues include Arg-55 and Thr-56. Residue Lys-85 coordinates L-aspartate. Carbamoyl phosphate contacts are provided by Arg-106, His-135, and Gln-138. 2 residues coordinate L-aspartate: Arg-168 and Arg-230. Residues Leu-268 and Pro-269 each coordinate carbamoyl phosphate.

Belongs to the aspartate/ornithine carbamoyltransferase superfamily. ATCase family. As to quaternary structure, heterododecamer (2C3:3R2) of six catalytic PyrB chains organized as two trimers (C3), and six regulatory PyrI chains organized as three dimers (R2).

The enzyme catalyses carbamoyl phosphate + L-aspartate = N-carbamoyl-L-aspartate + phosphate + H(+). It functions in the pathway pyrimidine metabolism; UMP biosynthesis via de novo pathway; (S)-dihydroorotate from bicarbonate: step 2/3. Its function is as follows. Catalyzes the condensation of carbamoyl phosphate and aspartate to form carbamoyl aspartate and inorganic phosphate, the committed step in the de novo pyrimidine nucleotide biosynthesis pathway. The polypeptide is Aspartate carbamoyltransferase catalytic subunit (Salmonella dublin (strain CT_02021853)).